A 318-amino-acid polypeptide reads, in one-letter code: Esterase FVEG_12639 (318 aa).

Active-site residues include serine 156, aspartate 255, and histidine 285.

It belongs to the AB hydrolase 3 family.

Functionally, esterase; part of the Fusarium detoxification of benzoxazolinone cluster 2 (FDB2) involved in the degradation of benzoxazolinones produced by the host plant. Maize, wheat, and rye produce the 2 benzoxazinone phytoanticipins 2,4-dihy-droxy-7-methoxy-1,4-benzoxazin-3-one (DIMBOA) and 2,4-dihydroxy-1,4-benzoxazin-3-one (DIBOA) that, due to their inherent instability once released, spontaneously degrade to the more stable corresponding benzoxazolinones, 6-methoxy-2-benzoxazolinone (MBOA) and 2-benzoxazolinone (BOA), respectively. The first step in the detoxification of benzoxazolinones involves the hydrolysis of the cyclic ester bond of benzoxazolinones by the FDB1 cluster gamma-lactamase MBL1 to aminophenols. MBL1 is able to convert BOA into 2-aminophenol (2-AP), as well as MBOA into 5-methoxy-2-aminophenol (2-AMP). The FDB2 cluster N-malonyltransferase FDB2/NAT1 then metabolizes aminophenols via N-malonylation to non-toxic malonamic acids. FDB2/NAT1 converts 2-AP into N-(2-hydroxyphenyl) malonamic acid (HPMA) and 2-AMP into N-(2-hydroxy-4-methoxyphenyl) malonamic acid (HMPMA). The duplicated dienlactone hydrolases DLH1 and DLH2 may provide redundant function for hydrolyzing the lactone moiety in the BOA molecule. The roles of the amidases an other enzymes encoded by the 2 FDB clusters have not been identified so far. The polypeptide is Esterase FVEG_12639 (Gibberella moniliformis (strain M3125 / FGSC 7600) (Maize ear and stalk rot fungus)).